A 158-amino-acid chain; its full sequence is Secreted RxLR effector protein 131 (158 aa).

The first 20 residues, 1–20, serve as a signal peptide directing secretion; sequence MRQIPLVVVLLLAYAARLQG. The RxLR-dEER signature appears at 39-57; sequence RDLDGSTTSMSVNVDDEER. A host BKI1-binding region spans residues 120 to 158; the sequence is KGNVKYLAIIYVICILSVLGILGTVFAINRNISNQYIHE. Residues 127-147 traverse the membrane as a helical segment; that stretch reads AIIYVICILSVLGILGTVFAI. N-linked (GlcNAc...) asparagine glycosylation is present at asparagine 150.

This sequence belongs to the RxLR effector family. In terms of assembly, interacts with host BKI1.

The protein resides in the secreted. The protein localises to the host cell membrane. Secreted effector that suppresses pathogen-associated molecular pattern (PAMP)-triggered immunity (PTI) in host plants. Suppresses both defense-related brassinosteroid (BR) and ERECTA (ER) signaling pathways in planta by interacting with host BRI1 kinase inhibitor 1 (BKI1) at the host plasma membrane, leading to a host dwarf phenotype. This is Secreted RxLR effector protein 131 from Plasmopara viticola (Downy mildew of grapevine).